Consider the following 20-residue polypeptide: Ribosome-inactivating protein (20 aa).

A disordered region spans residues 1 to 20 (NVRFDLSGATSSSYKTFIKN). The span at 8–20 (GATSSSYKTFIKN) shows a compositional bias: polar residues.

This sequence belongs to the ribosome-inactivating protein family. Type 1 RIP subfamily.

The catalysed reaction is Endohydrolysis of the N-glycosidic bond at one specific adenosine on the 28S rRNA.. The chain is Ribosome-inactivating protein from Cucurbita pepo (Vegetable marrow).